A 271-amino-acid chain; its full sequence is NADPH-dependent 7-cyano-7-deazaguanine reductase (271 aa).

A substrate-binding site is contributed by 79 to 81; that stretch reads IES. 81 to 82 lines the NADPH pocket; sequence SK. Catalysis depends on Cys-178, which acts as the Thioimide intermediate. The active-site Proton donor is the Asp-185. 217-218 serves as a coordination point for substrate; the sequence is HE. An NADPH-binding site is contributed by 246-247; that stretch reads RG.

It belongs to the GTP cyclohydrolase I family. QueF type 2 subfamily. In terms of assembly, homodimer.

Its subcellular location is the cytoplasm. The catalysed reaction is 7-aminomethyl-7-carbaguanine + 2 NADP(+) = 7-cyano-7-deazaguanine + 2 NADPH + 3 H(+). Its pathway is tRNA modification; tRNA-queuosine biosynthesis. Functionally, catalyzes the NADPH-dependent reduction of 7-cyano-7-deazaguanine (preQ0) to 7-aminomethyl-7-deazaguanine (preQ1). The sequence is that of NADPH-dependent 7-cyano-7-deazaguanine reductase from Acinetobacter baylyi (strain ATCC 33305 / BD413 / ADP1).